Here is a 330-residue protein sequence, read N- to C-terminus: tRNA U34 carboxymethyltransferase (330 aa).

Residues Lys91, Trp105, Lys110, Gly130, 152-154 (DPS), 181-182 (IE), Met196, Tyr200, and Arg315 contribute to the carboxy-S-adenosyl-L-methionine site.

Belongs to the class I-like SAM-binding methyltransferase superfamily. CmoB family. As to quaternary structure, homotetramer.

The enzyme catalyses carboxy-S-adenosyl-L-methionine + 5-hydroxyuridine(34) in tRNA = 5-carboxymethoxyuridine(34) in tRNA + S-adenosyl-L-homocysteine + H(+). Functionally, catalyzes carboxymethyl transfer from carboxy-S-adenosyl-L-methionine (Cx-SAM) to 5-hydroxyuridine (ho5U) to form 5-carboxymethoxyuridine (cmo5U) at position 34 in tRNAs. The polypeptide is tRNA U34 carboxymethyltransferase (Shewanella woodyi (strain ATCC 51908 / MS32)).